We begin with the raw amino-acid sequence, 62 residues long: RRCFNQQSSQPQTNKSCPPGENSCYRKQWRDHRGTIIERGCGCPTVKPGVKLRCCQSEDCNN.

Polar residues predominate over residues 1–16; it reads RRCFNQQSSQPQTNKS. Residues 1–22 form a disordered region; that stretch reads RRCFNQQSSQPQTNKSCPPGEN. Cystine bridges form between C3-C24, C17-C41, C43-C54, and C55-C60.

It belongs to the three-finger toxin family. Short-chain subfamily. Type I alpha-neurotoxin sub-subfamily. Expressed by the venom gland.

Its subcellular location is the secreted. In terms of biological role, binds to muscle nicotinic acetylcholine receptor (nAChR) and inhibit acetylcholine from binding to the receptor, thereby impairing neuromuscular transmission. The protein is Short neurotoxin C of Laticauda laticaudata (Blue-ringed sea krait).